The primary structure comprises 274 residues: WIMGHMVNDISLVDEYLNQGANSLELDVSFNSEGIAEKLYHGYPCDCLRSCTKTVAFSTYLDYIRNITTPGDPKFRNELVLLMLDLKLKQIAPEAAYWAGFDTAEKLLDYYWQNGQSGARAYIILSIEILTHYEFVTGFKHQLQNKGHEEYSAKIGWDFSGNENLEEIHKVMSDLDLKEHIWQGDGITNCLPRGDDRLKEALFRRNTDWYKYIDKVYTWSIDKKSSIRNALRLGVDGVMTNYPERVVEVLQEPEFSSKLRLATYEDDPWARTVL.

Residue H5 is part of the active site. Residues E25 and D27 each contribute to the Mg(2+) site. The active-site Nucleophile is H41. 2 cysteine pairs are disulfide-bonded: C45–C51 and C47–C190. Residue N66 is glycosylated (N-linked (GlcNAc...) asparagine). D85 is a Mg(2+) binding site.

The protein belongs to the arthropod phospholipase D family. Class II subfamily. It depends on Mg(2+) as a cofactor. Expressed by the venom gland.

It is found in the secreted. The catalysed reaction is an N-(acyl)-sphingosylphosphocholine = an N-(acyl)-sphingosyl-1,3-cyclic phosphate + choline. The enzyme catalyses an N-(acyl)-sphingosylphosphoethanolamine = an N-(acyl)-sphingosyl-1,3-cyclic phosphate + ethanolamine. It catalyses the reaction a 1-acyl-sn-glycero-3-phosphocholine = a 1-acyl-sn-glycero-2,3-cyclic phosphate + choline. It carries out the reaction a 1-acyl-sn-glycero-3-phosphoethanolamine = a 1-acyl-sn-glycero-2,3-cyclic phosphate + ethanolamine. Functionally, dermonecrotic toxins cleave the phosphodiester linkage between the phosphate and headgroup of certain phospholipids (sphingolipid and lysolipid substrates), forming an alcohol (often choline) and a cyclic phosphate. This toxin acts on sphingomyelin (SM). It may also act on ceramide phosphoethanolamine (CPE), lysophosphatidylcholine (LPC) and lysophosphatidylethanolamine (LPE), but not on lysophosphatidylserine (LPS), and lysophosphatidylglycerol (LPG). It acts by transphosphatidylation, releasing exclusively cyclic phosphate products as second products. Induces dermonecrosis, hemolysis, increased vascular permeability, edema, inflammatory response, and platelet aggregation. In Loxosceles cf. spinulosa (strain GJB-2008) (Recluse spider), this protein is Dermonecrotic toxin LcsSicTox-betaIC1.